Here is a 95-residue protein sequence, read N- to C-terminus: Phosphoribosyl-ATP pyrophosphatase (95 aa).

This sequence belongs to the PRA-PH family.

It is found in the cytoplasm. The catalysed reaction is 1-(5-phospho-beta-D-ribosyl)-ATP + H2O = 1-(5-phospho-beta-D-ribosyl)-5'-AMP + diphosphate + H(+). Its pathway is amino-acid biosynthesis; L-histidine biosynthesis; L-histidine from 5-phospho-alpha-D-ribose 1-diphosphate: step 2/9. This is Phosphoribosyl-ATP pyrophosphatase from Methanocella arvoryzae (strain DSM 22066 / NBRC 105507 / MRE50).